We begin with the raw amino-acid sequence, 126 residues long: MAVPNELKYSKEHEWVKVEGNVAIIGITEYAQSELGDIVFVELPETDDEINEGDTFGSVESVKTVSELYAPISGKVVEVNEELEDSPEFVNESPYEKAWMVKVEISDESQIEALLTAEKYSEMIGE.

Residues 22 to 104 enclose the Lipoyl-binding domain; it reads VAIIGITEYA…YEKAWMVKVE (83 aa). Lys63 bears the N6-lipoyllysine mark.

The protein belongs to the GcvH family. The glycine cleavage system is composed of four proteins: P, T, L and H. (R)-lipoate serves as cofactor.

In terms of biological role, the glycine cleavage system catalyzes the degradation of glycine. The H protein shuttles the methylamine group of glycine from the P protein to the T protein. Is also involved in protein lipoylation via its role as an octanoyl/lipoyl carrier protein intermediate. The polypeptide is Glycine cleavage system H protein (Staphylococcus aureus (strain USA300)).